The following is a 167-amino-acid chain: NAD(P)H-quinone oxidoreductase subunit J (167 aa).

Belongs to the complex I 30 kDa subunit family. NDH-1 can be composed of about 15 different subunits; different subcomplexes with different compositions have been identified which probably have different functions.

The protein resides in the cellular thylakoid membrane. The catalysed reaction is a plastoquinone + NADH + (n+1) H(+)(in) = a plastoquinol + NAD(+) + n H(+)(out). The enzyme catalyses a plastoquinone + NADPH + (n+1) H(+)(in) = a plastoquinol + NADP(+) + n H(+)(out). In terms of biological role, NDH-1 shuttles electrons from an unknown electron donor, via FMN and iron-sulfur (Fe-S) centers, to quinones in the respiratory and/or the photosynthetic chain. The immediate electron acceptor for the enzyme in this species is believed to be plastoquinone. Couples the redox reaction to proton translocation, and thus conserves the redox energy in a proton gradient. Cyanobacterial NDH-1 also plays a role in inorganic carbon-concentration. This Trichodesmium erythraeum (strain IMS101) protein is NAD(P)H-quinone oxidoreductase subunit J.